We begin with the raw amino-acid sequence, 466 residues long: L-seryl-tRNA(Sec) selenium transferase (466 aa).

An N6-(pyridoxal phosphate)lysine modification is found at lysine 292.

Belongs to the SelA family. It depends on pyridoxal 5'-phosphate as a cofactor.

It localises to the cytoplasm. It carries out the reaction L-seryl-tRNA(Sec) + selenophosphate + H(+) = L-selenocysteinyl-tRNA(Sec) + phosphate. Its pathway is aminoacyl-tRNA biosynthesis; selenocysteinyl-tRNA(Sec) biosynthesis; selenocysteinyl-tRNA(Sec) from L-seryl-tRNA(Sec) (bacterial route): step 1/1. Converts seryl-tRNA(Sec) to selenocysteinyl-tRNA(Sec) required for selenoprotein biosynthesis. This is L-seryl-tRNA(Sec) selenium transferase from Rhizobium meliloti (strain 1021) (Ensifer meliloti).